A 498-amino-acid polypeptide reads, in one-letter code: ATP synthase subunit beta, chloroplastic (498 aa).

Thr6 carries the post-translational modification Phosphothreonine. Position 13 is a phosphoserine (Ser13). ATP is bound at residue 172 to 179; that stretch reads GGAGVGKT.

It belongs to the ATPase alpha/beta chains family. As to quaternary structure, F-type ATPases have 2 components, CF(1) - the catalytic core - and CF(0) - the membrane proton channel. CF(1) has five subunits: alpha(3), beta(3), gamma(1), delta(1), epsilon(1). CF(0) has four main subunits: a(1), b(1), b'(1) and c(9-12).

Its subcellular location is the plastid. The protein resides in the chloroplast thylakoid membrane. It catalyses the reaction ATP + H2O + 4 H(+)(in) = ADP + phosphate + 5 H(+)(out). Functionally, produces ATP from ADP in the presence of a proton gradient across the membrane. The catalytic sites are hosted primarily by the beta subunits. This chain is ATP synthase subunit beta, chloroplastic, found in Capsella bursa-pastoris (Shepherd's purse).